A 235-amino-acid polypeptide reads, in one-letter code: UPF0758 protein Swol_1642 (235 aa).

An MPN domain is found at 109–235 (IIKSPEDVQE…YCSLKARGLI (127 aa)). Residues H184, H186, and D197 each coordinate Zn(2+). Residues 184–197 (HNHPSGDPTPSQED) carry the JAMM motif motif.

It belongs to the UPF0758 family.

In Syntrophomonas wolfei subsp. wolfei (strain DSM 2245B / Goettingen), this protein is UPF0758 protein Swol_1642.